A 261-amino-acid chain; its full sequence is Undecaprenyl-diphosphatase (261 aa).

6 helical membrane passes run 39 to 59 (NVLLFDILVHLGTLVPLLIIF), 76 to 96 (LLIIAGTVPTALIGLGFKDFF), 99 to 119 (LFVSGSTLGIEFIITGLILWL), 173 to 193 (AAKFSFLLSIPAILGAAVLDL), 206 to 226 (IDLMPFIVGFFAAMLSGYFAV), and 238 to 258 (LTWFSYYVWILGVTILVLQAA).

Belongs to the UppP family.

Its subcellular location is the cell membrane. It carries out the reaction di-trans,octa-cis-undecaprenyl diphosphate + H2O = di-trans,octa-cis-undecaprenyl phosphate + phosphate + H(+). In terms of biological role, catalyzes the dephosphorylation of undecaprenyl diphosphate (UPP). Confers resistance to bacitracin. The chain is Undecaprenyl-diphosphatase from Carboxydothermus hydrogenoformans (strain ATCC BAA-161 / DSM 6008 / Z-2901).